Here is a 560-residue protein sequence, read N- to C-terminus: Long-chain-fatty-acid--CoA ligase (560 aa).

Belongs to the ATP-dependent AMP-binding enzyme family.

The catalysed reaction is a long-chain fatty acid + ATP + CoA = a long-chain fatty acyl-CoA + AMP + diphosphate. The protein is Long-chain-fatty-acid--CoA ligase (lcfA) of Bacillus subtilis (strain 168).